The sequence spans 436 residues: 3-ketoacyl-CoA thiolase (436 aa).

The active-site Acyl-thioester intermediate is the Cys99. Catalysis depends on proton acceptor residues His392 and Cys422.

The protein belongs to the thiolase-like superfamily. Thiolase family. Heterotetramer of two alpha chains (FadJ) and two beta chains (FadI).

The protein resides in the cytoplasm. The enzyme catalyses an acyl-CoA + acetyl-CoA = a 3-oxoacyl-CoA + CoA. The protein operates within lipid metabolism; fatty acid beta-oxidation. In terms of biological role, catalyzes the final step of fatty acid oxidation in which acetyl-CoA is released and the CoA ester of a fatty acid two carbons shorter is formed. This is 3-ketoacyl-CoA thiolase from Salmonella schwarzengrund (strain CVM19633).